An 89-amino-acid chain; its full sequence is Large ribosomal subunit protein bL27 (89 aa).

The tract at residues 1-20 (MAHKKAGGSSRNGRDSAGKR) is disordered.

The protein belongs to the bacterial ribosomal protein bL27 family.

This is Large ribosomal subunit protein bL27 from Rhodopseudomonas palustris (strain HaA2).